We begin with the raw amino-acid sequence, 557 residues long: Transcription factor fil1 (557 aa).

Residues 234-258 (SPVKRELNDSTSPSKLSESSSSLTG) are disordered. A compositionally biased stretch (low complexity) spans 243 to 258 (STSPSKLSESSSSLTG). 2 GATA-type zinc fingers span residues 365–390 (CFNC…CNAC) and 419–443 (CANC…CNAC).

It is found in the nucleus. Its subcellular location is the cytoplasm. Activates genes required for amino acid biosynthesis and acts as a master transcriptional regulator during amino acid starvation. Binds variations of the DNA sequence 5'-GAT[AC]GC-3'. This is Transcription factor fil1 from Schizosaccharomyces pombe (strain 972 / ATCC 24843) (Fission yeast).